Reading from the N-terminus, the 804-residue chain is ATP-dependent RNA helicase dbp4 (804 aa).

The interval 1 to 24 (MAPANAPRNGKYAKSSQRTLKRKR) is disordered. Residues 46–74 (KAFTDLPLSEPTLSGLSASHYKTLTDIQS) carry the Q motif motif. The region spanning 77–251 (VSHALKGRDI…RLSLQDPEYV (175 aa)) is the Helicase ATP-binding domain. Residue 90–97 (AKTGSGKT) coordinates ATP. The DEAD box motif lies at 199 to 202 (DEAD). Positions 277–436 (KLDILWSFIR…SIKNQLQNMC (160 aa)) constitute a Helicase C-terminal domain. 3 disordered regions span residues 493-541 (GDDT…DRMF), 589-615 (DKQL…KDVK), and 695-804 (LADV…GLLG). Residues 521–541 (DEKKSKKKDAPQVRTKYDRMF) are compositionally biased toward basic and acidic residues. Over residues 695-705 (LADVEDKELVK) the composition is skewed to basic and acidic residues. Residues 706 to 715 (QKRREKKEKR) are compositionally biased toward basic residues.

It belongs to the DEAD box helicase family. DDX10/DBP4 subfamily. In terms of assembly, interacts with the U3 and U14 snoRNAs. Associates with pre-ribosomal complexes.

It localises to the nucleus. The protein localises to the nucleolus. The catalysed reaction is ATP + H2O = ADP + phosphate + H(+). Functionally, ATP-dependent RNA helicase required for ribosome biogenesis. Involved in the release of U14 snoRNA in pre-ribosomal complexes. Required for pre-rRNA cleavage at site A2. The sequence is that of ATP-dependent RNA helicase dbp4 (dbp4) from Aspergillus terreus (strain NIH 2624 / FGSC A1156).